The following is an 85-amino-acid chain: Large ribosomal subunit protein bL27 (85 aa).

Residues M1 to V23 form a disordered region.

This sequence belongs to the bacterial ribosomal protein bL27 family.

This is Large ribosomal subunit protein bL27 from Methylococcus capsulatus (strain ATCC 33009 / NCIMB 11132 / Bath).